The sequence spans 430 residues: Protein arginine methyltransferase NDUFAF7, mitochondrial (430 aa).

The N-terminal 31 residues, 1-31 (MSGLARLRKTAFLMVSASANCRIQRYQSSRT), are a transit peptide targeting the mitochondrion.

It belongs to the NDUFAF7 family.

It is found in the mitochondrion. It carries out the reaction L-arginyl-[protein] + 2 S-adenosyl-L-methionine = N(omega),N(omega)'-dimethyl-L-arginyl-[protein] + 2 S-adenosyl-L-homocysteine + 2 H(+). In terms of biological role, arginine methyltransferase involved in the assembly or stability of mitochondrial NADH:ubiquinone oxidoreductase complex (complex I). Acts by mediating symmetric dimethylation of 'Arg-118' of ndufs2 after it assembles into the complex I, stabilizing the early intermediate complex. This Xenopus tropicalis (Western clawed frog) protein is Protein arginine methyltransferase NDUFAF7, mitochondrial.